A 310-amino-acid polypeptide reads, in one-letter code: Coproporphyrin III ferrochelatase (310 aa).

Residues Tyr-13, Arg-30, 46–47, Ser-54, and Tyr-125 each bind Fe-coproporphyrin III; that span reads RY. 2 residues coordinate Fe(2+): His-181 and Glu-262.

It belongs to the ferrochelatase family.

The protein localises to the cytoplasm. The enzyme catalyses Fe-coproporphyrin III + 2 H(+) = coproporphyrin III + Fe(2+). The protein operates within porphyrin-containing compound metabolism; protoheme biosynthesis. Functionally, involved in coproporphyrin-dependent heme b biosynthesis. Catalyzes the insertion of ferrous iron into coproporphyrin III to form Fe-coproporphyrin III. The polypeptide is Coproporphyrin III ferrochelatase (Halalkalibacterium halodurans (strain ATCC BAA-125 / DSM 18197 / FERM 7344 / JCM 9153 / C-125) (Bacillus halodurans)).